The primary structure comprises 703 residues: DNA ligase (703 aa).

NAD(+)-binding positions include 54-58 (DAEYD), 103-104 (SL), and Glu-132. Lys-134 functions as the N6-AMP-lysine intermediate in the catalytic mechanism. Arg-155, Glu-192, Lys-308, and Lys-332 together coordinate NAD(+). Zn(2+) is bound by residues Cys-426, Cys-429, Cys-444, and Cys-450. The 91-residue stretch at 608–698 (EGPGPLDGVV…ADAARALAVP (91 aa)) folds into the BRCT domain.

The protein belongs to the NAD-dependent DNA ligase family. LigA subfamily. Mg(2+) is required as a cofactor. The cofactor is Mn(2+).

It catalyses the reaction NAD(+) + (deoxyribonucleotide)n-3'-hydroxyl + 5'-phospho-(deoxyribonucleotide)m = (deoxyribonucleotide)n+m + AMP + beta-nicotinamide D-nucleotide.. Functionally, DNA ligase that catalyzes the formation of phosphodiester linkages between 5'-phosphoryl and 3'-hydroxyl groups in double-stranded DNA using NAD as a coenzyme and as the energy source for the reaction. It is essential for DNA replication and repair of damaged DNA. This chain is DNA ligase, found in Parafrankia sp. (strain EAN1pec).